Reading from the N-terminus, the 469-residue chain is Glutamate--tRNA ligase (469 aa).

The 'HIGH' region signature appears at 11 to 21; the sequence is PSPTGFIHLGN. Positions 243–247 match the 'KMSKS' region motif; it reads KMSKR. Position 246 (Lys-246) interacts with ATP.

It belongs to the class-I aminoacyl-tRNA synthetase family. Glutamate--tRNA ligase type 1 subfamily. As to quaternary structure, monomer.

The protein resides in the cytoplasm. It carries out the reaction tRNA(Glu) + L-glutamate + ATP = L-glutamyl-tRNA(Glu) + AMP + diphosphate. Functionally, catalyzes the attachment of glutamate to tRNA(Glu) in a two-step reaction: glutamate is first activated by ATP to form Glu-AMP and then transferred to the acceptor end of tRNA(Glu). The chain is Glutamate--tRNA ligase from Burkholderia cenocepacia (strain HI2424).